The chain runs to 133 residues: Thioredoxin-like protein CXXS1 (133 aa).

Residues 1 to 120 (MEIQQQKGVG…VKKMVDASAE (120 aa)) enclose the Thioredoxin domain.

Belongs to the thioredoxin family.

The sequence is that of Thioredoxin-like protein CXXS1 from Oryza sativa subsp. japonica (Rice).